The sequence spans 113 residues: U11-theraphotoxin-Hhn1h (113 aa).

The signal sequence occupies residues 1–21 (MNTVRVTFLLVFVLVVSLGQA). A propeptide spanning residues 22–74 (DKDENRMEMQEKTEQGKSYLDFAENLLLQKLEELEAKLLEEDSEESRNSRQKR) is cleaved from the precursor. Residues 61–83 (EEDSEESRNSRQKRRIGEGVPCD) are disordered. Intrachain disulfides connect cysteine 82–cysteine 95 and cysteine 89–cysteine 110.

It belongs to the neurotoxin 14 (magi-1) family. 01 (HNTX-16) subfamily. Expressed by the venom gland.

The protein resides in the secreted. Probable ion channel inhibitor. The chain is U11-theraphotoxin-Hhn1h from Cyriopagopus hainanus (Chinese bird spider).